Here is a 439-residue protein sequence, read N- to C-terminus: Tol-Pal system protein TolB (439 aa).

A signal peptide spans 1 to 21; it reads MRFRLALSLLSLALFAAPAAA.

Belongs to the TolB family. In terms of assembly, the Tol-Pal system is composed of five core proteins: the inner membrane proteins TolA, TolQ and TolR, the periplasmic protein TolB and the outer membrane protein Pal. They form a network linking the inner and outer membranes and the peptidoglycan layer.

The protein localises to the periplasm. Its function is as follows. Part of the Tol-Pal system, which plays a role in outer membrane invagination during cell division and is important for maintaining outer membrane integrity. This is Tol-Pal system protein TolB from Rhizorhabdus wittichii (strain DSM 6014 / CCUG 31198 / JCM 15750 / NBRC 105917 / EY 4224 / RW1) (Sphingomonas wittichii).